The sequence spans 766 residues: 5-methyltetrahydropteroyltriglutamate--homocysteine methyltransferase 1 (766 aa).

2 residues coordinate 5-methyltetrahydropteroyltri-L-glutamate: Lys-18 and Asn-116. Residues 438–440 and Glu-491 each bind L-homocysteine; that span reads IGS. L-methionine-binding positions include 438–440 and Glu-491; that span reads IGS. 5-methyltetrahydropteroyltri-L-glutamate contacts are provided by residues Asp-496, Tyr-519, 522–523, and Trp-568; that span reads RC. Asp-606 lines the L-homocysteine pocket. Asp-606 contributes to the L-methionine binding site. Positions 648, 650, 659, and 672 each coordinate Zn(2+). The Proton donor role is filled by His-702. Cys-734 is a Zn(2+) binding site.

It belongs to the vitamin-B12 independent methionine synthase family. It depends on Zn(2+) as a cofactor.

The protein localises to the cytoplasm. Its subcellular location is the cytosol. The enzyme catalyses 5-methyltetrahydropteroyltri-L-glutamate + L-homocysteine = tetrahydropteroyltri-L-glutamate + L-methionine. Its pathway is amino-acid biosynthesis; L-methionine biosynthesis via de novo pathway; L-methionine from L-homocysteine (MetE route): step 1/1. Functionally, catalyzes the transfer of a methyl group from 5-methyltetrahydrofolate to homocysteine resulting in methionine formation. The chain is 5-methyltetrahydropteroyltriglutamate--homocysteine methyltransferase 1 from Oryza sativa subsp. japonica (Rice).